We begin with the raw amino-acid sequence, 405 residues long: L-rhamnonate dehydratase (405 aa).

Substrate-binding residues include H33 and R59. D226, E252, and E280 together coordinate Mg(2+). H329 acts as the Proton acceptor in catalysis. Residue E349 coordinates substrate.

This sequence belongs to the mandelate racemase/muconate lactonizing enzyme family. RhamD subfamily. As to quaternary structure, homooctamer; tetramer of dimers. Mg(2+) serves as cofactor.

The catalysed reaction is L-rhamnonate = 2-dehydro-3-deoxy-L-rhamnonate + H2O. Catalyzes the dehydration of L-rhamnonate to 2-keto-3-deoxy-L-rhamnonate (KDR). The chain is L-rhamnonate dehydratase from Escherichia coli O81 (strain ED1a).